We begin with the raw amino-acid sequence, 124 residues long: Group 1 truncated hemoglobin GlbN (124 aa).

Residues His-46, His-70, and His-117 each coordinate heme.

This sequence belongs to the truncated hemoglobin family. Group I subfamily. Monomer. Requires heme as cofactor.

In terms of biological role, forms a very stable complex with oxygen. The oxygen dissociation rate is 0.011 sec(-1). This Synechocystis sp. (strain ATCC 27184 / PCC 6803 / Kazusa) protein is Group 1 truncated hemoglobin GlbN (glbN).